The primary structure comprises 115 residues: Large ribosomal subunit protein uL22 (115 aa).

Belongs to the universal ribosomal protein uL22 family. In terms of assembly, part of the 50S ribosomal subunit.

Its function is as follows. This protein binds specifically to 23S rRNA; its binding is stimulated by other ribosomal proteins, e.g. L4, L17, and L20. It is important during the early stages of 50S assembly. It makes multiple contacts with different domains of the 23S rRNA in the assembled 50S subunit and ribosome. Functionally, the globular domain of the protein is located near the polypeptide exit tunnel on the outside of the subunit, while an extended beta-hairpin is found that lines the wall of the exit tunnel in the center of the 70S ribosome. This is Large ribosomal subunit protein uL22 from Coxiella burnetii (strain CbuK_Q154) (Coxiella burnetii (strain Q154)).